The chain runs to 268 residues: Taurine import ATP-binding protein TauB (268 aa).

Residues 4–236 (LSIENISMRF…MGVNADLREV (233 aa)) enclose the ABC transporter domain. Residue 41-48 (GPSGCGKT) participates in ATP binding.

This sequence belongs to the ABC transporter superfamily. Taurine importer (TC 3.A.1.17.1) family. The complex is composed of two ATP-binding proteins (TauB), two transmembrane proteins (TauC) and a solute-binding protein (TauA).

The protein localises to the cell inner membrane. The enzyme catalyses taurine(out) + ATP + H2O = taurine(in) + ADP + phosphate + H(+). Its function is as follows. Part of the ABC transporter complex TauABC involved in taurine import. Responsible for energy coupling to the transport system. This chain is Taurine import ATP-binding protein TauB, found in Ruegeria pomeroyi (strain ATCC 700808 / DSM 15171 / DSS-3) (Silicibacter pomeroyi).